We begin with the raw amino-acid sequence, 325 residues long: Acetyl-coenzyme A carboxylase carboxyl transferase subunit beta (325 aa).

One can recognise a CoA carboxyltransferase N-terminal domain in the interval 24–293 (LWIKCPDSGH…AEIEVVTPEP (270 aa)).

This sequence belongs to the AccD/PCCB family. Acetyl-CoA carboxylase is a heterohexamer composed of biotin carboxyl carrier protein (AccB), biotin carboxylase (AccC) and two subunits each of ACCase subunit alpha (AccA) and ACCase subunit beta (AccD).

The protein resides in the cytoplasm. The catalysed reaction is N(6)-carboxybiotinyl-L-lysyl-[protein] + acetyl-CoA = N(6)-biotinyl-L-lysyl-[protein] + malonyl-CoA. The protein operates within lipid metabolism; malonyl-CoA biosynthesis; malonyl-CoA from acetyl-CoA: step 1/1. Component of the acetyl coenzyme A carboxylase (ACC) complex. Biotin carboxylase (BC) catalyzes the carboxylation of biotin on its carrier protein (BCCP) and then the CO(2) group is transferred by the transcarboxylase to acetyl-CoA to form malonyl-CoA. This chain is Acetyl-coenzyme A carboxylase carboxyl transferase subunit beta, found in Rhodopseudomonas palustris (strain BisA53).